A 239-amino-acid polypeptide reads, in one-letter code: Superoxide dismutase 1 copper chaperone (239 aa).

Residues 7–70 (FYEATYAVPM…ALRDCGRDAI (64 aa)) enclose the HMA domain. 2 residues coordinate Cu cation: Cys-18 and Cys-21. An intrachain disulfide couples Cys-28 to Cys-65. Asp-163 lines the Zn(2+) pocket. Cu cation is bound by residues Cys-219 and Cys-221.

The protein belongs to the CCS1 family. The cofactor is Cu(2+).

The protein resides in the cytoplasm. Its function is as follows. Copper chaperone for superoxide dismutase 1 (SOD1). Binds copper ions and delivers them specifically to SOD1. The polypeptide is Superoxide dismutase 1 copper chaperone (CCS1) (Candida glabrata (strain ATCC 2001 / BCRC 20586 / JCM 3761 / NBRC 0622 / NRRL Y-65 / CBS 138) (Yeast)).